Reading from the N-terminus, the 432-residue chain is Gamma-glutamyl phosphate reductase (432 aa).

Belongs to the gamma-glutamyl phosphate reductase family.

Its subcellular location is the cytoplasm. It carries out the reaction L-glutamate 5-semialdehyde + phosphate + NADP(+) = L-glutamyl 5-phosphate + NADPH + H(+). Its pathway is amino-acid biosynthesis; L-proline biosynthesis; L-glutamate 5-semialdehyde from L-glutamate: step 2/2. Its function is as follows. Catalyzes the NADPH-dependent reduction of L-glutamate 5-phosphate into L-glutamate 5-semialdehyde and phosphate. The product spontaneously undergoes cyclization to form 1-pyrroline-5-carboxylate. In Corynebacterium melassecola, this protein is Gamma-glutamyl phosphate reductase.